The primary structure comprises 504 residues: ATP synthase subunit alpha 1 (504 aa).

Residue 172-179 (GDRQTGKT) participates in ATP binding.

This sequence belongs to the ATPase alpha/beta chains family. As to quaternary structure, F-type ATPases have 2 components, CF(1) - the catalytic core - and CF(0) - the membrane proton channel. CF(1) has five subunits: alpha(3), beta(3), gamma(1), delta(1), epsilon(1). CF(0) has three main subunits: a(1), b(2) and c(9-12). The alpha and beta chains form an alternating ring which encloses part of the gamma chain. CF(1) is attached to CF(0) by a central stalk formed by the gamma and epsilon chains, while a peripheral stalk is formed by the delta and b chains.

It localises to the cell inner membrane. It carries out the reaction ATP + H2O + 4 H(+)(in) = ADP + phosphate + 5 H(+)(out). In terms of biological role, produces ATP from ADP in the presence of a proton gradient across the membrane. The alpha chain is a regulatory subunit. The sequence is that of ATP synthase subunit alpha 1 from Rhodopirellula baltica (strain DSM 10527 / NCIMB 13988 / SH1).